Reading from the N-terminus, the 284-residue chain is Digeranylgeranylglyceryl phosphate synthase (284 aa).

The next 7 helical transmembrane spans lie at 10 to 30 (IHNV…SSMW), 37 to 57 (LILA…INDV), 76 to 98 (AVSL…ILSA), 102 to 119 (YLQF…IFYA), 126 to 146 (GIYG…YGGL), 217 to 237 (LPLF…FLYI), and 260 to 280 (GSAF…QFLF).

It belongs to the UbiA prenyltransferase family. DGGGP synthase subfamily. Mg(2+) is required as a cofactor.

The protein localises to the cell membrane. The enzyme catalyses sn-3-O-(geranylgeranyl)glycerol 1-phosphate + (2E,6E,10E)-geranylgeranyl diphosphate = 2,3-bis-O-(geranylgeranyl)-sn-glycerol 1-phosphate + diphosphate. Its pathway is membrane lipid metabolism; glycerophospholipid metabolism. Prenyltransferase that catalyzes the transfer of the geranylgeranyl moiety of geranylgeranyl diphosphate (GGPP) to the C2 hydroxyl of (S)-3-O-geranylgeranylglyceryl phosphate (GGGP). This reaction is the second ether-bond-formation step in the biosynthesis of archaeal membrane lipids. This is Digeranylgeranylglyceryl phosphate synthase from Metallosphaera sedula (strain ATCC 51363 / DSM 5348 / JCM 9185 / NBRC 15509 / TH2).